A 193-amino-acid chain; its full sequence is Pyridoxal 5'-phosphate synthase subunit PdxT (193 aa).

52 to 54 (GES) contributes to the L-glutamine binding site. The active-site Nucleophile is the C84. Residues R111 and 139–140 (IR) contribute to the L-glutamine site. Active-site charge relay system residues include H176 and E178.

Belongs to the glutaminase PdxT/SNO family. In terms of assembly, in the presence of PdxS, forms a dodecamer of heterodimers. Only shows activity in the heterodimer.

The enzyme catalyses aldehydo-D-ribose 5-phosphate + D-glyceraldehyde 3-phosphate + L-glutamine = pyridoxal 5'-phosphate + L-glutamate + phosphate + 3 H2O + H(+). It catalyses the reaction L-glutamine + H2O = L-glutamate + NH4(+). Its pathway is cofactor biosynthesis; pyridoxal 5'-phosphate biosynthesis. Functionally, catalyzes the hydrolysis of glutamine to glutamate and ammonia as part of the biosynthesis of pyridoxal 5'-phosphate. The resulting ammonia molecule is channeled to the active site of PdxS. The chain is Pyridoxal 5'-phosphate synthase subunit PdxT from Pasteurella multocida (strain Pm70).